The chain runs to 448 residues: Exodeoxyribonuclease 7 large subunit (448 aa).

The protein belongs to the XseA family. As to quaternary structure, heterooligomer composed of large and small subunits.

The protein localises to the cytoplasm. The enzyme catalyses Exonucleolytic cleavage in either 5'- to 3'- or 3'- to 5'-direction to yield nucleoside 5'-phosphates.. Its function is as follows. Bidirectionally degrades single-stranded DNA into large acid-insoluble oligonucleotides, which are then degraded further into small acid-soluble oligonucleotides. This chain is Exodeoxyribonuclease 7 large subunit, found in Histophilus somni (strain 129Pt) (Haemophilus somnus).